The chain runs to 535 residues: Ankyrin repeat domain-containing protein 34C (535 aa).

ANK repeat units lie at residues 10-39 (TDGNSLLKAVWLGRLRLTRLLLEGGAYINE), 43-80 (KGETALMVACITKHVDQQSISKSKMVKYLLDNRADPNI), 84-114 (SGKTALIHACIRRAGGEVVSLLLENGADPSL), and 118-147 (TGASALVYAINADDKDALKHLLDACKAKGK). 2 disordered regions span residues 159-181 (SGTKTTKQYLNVPPSPKVEDRHS) and 214-237 (AGHPSSCNTSKAVNEPGSPTRKVS). A compositionally biased stretch (polar residues) spans 216-225 (HPSSCNTSKA). Ser-301 is modified (phosphoserine). Residues 381 to 444 (DLDIQPGPDP…RRRPPHLLER (64 aa)) form a disordered region. Ser-447 is subject to Phosphoserine.

It belongs to the ANKRD34 family.

The polypeptide is Ankyrin repeat domain-containing protein 34C (ANKRD34C) (Homo sapiens (Human)).